The primary structure comprises 243 residues: tRNA pseudouridine synthase A (243 aa).

D54 acts as the Nucleophile in catalysis. Y112 is a binding site for substrate.

Belongs to the tRNA pseudouridine synthase TruA family. Homodimer.

It catalyses the reaction uridine(38/39/40) in tRNA = pseudouridine(38/39/40) in tRNA. In terms of biological role, formation of pseudouridine at positions 38, 39 and 40 in the anticodon stem and loop of transfer RNAs. This is tRNA pseudouridine synthase A from Onion yellows phytoplasma (strain OY-M).